Here is a 186-residue protein sequence, read N- to C-terminus: ADP-ribosylation factor-like protein DDB_G0292332 (186 aa).

Residues 24-31, 78-82, and 138-141 each bind GTP; these read GVENVGKT, DIGGK, and NKQD.

Belongs to the small GTPase superfamily. Arf family.

Functionally, binds and exchanges GTP and GDP. This is ADP-ribosylation factor-like protein DDB_G0292332 from Dictyostelium discoideum (Social amoeba).